We begin with the raw amino-acid sequence, 428 residues long: Putative FBD-associated F-box protein At5g56390 (428 aa).

One can recognise an F-box domain in the interval 2 to 50 (DKISQLHDELLLGILSLLPNAKDVVATMVLSKRWRYLWMMVPSLVYDDS). One can recognise an FBD domain in the interval 344–394 (CWNETSLVPEYLLPSLETFEWVDYEGTKTEKQVVAFILRIASCLKQATIVS).

The protein is Putative FBD-associated F-box protein At5g56390 of Arabidopsis thaliana (Mouse-ear cress).